Consider the following 204-residue polypeptide: Small ribosomal subunit protein uS4c (204 aa).

The S4 RNA-binding domain occupies 90–150; it reads MRLDNILYRL…GKKTDQLKTI (61 aa).

It belongs to the universal ribosomal protein uS4 family. In terms of assembly, part of the 30S ribosomal subunit. Contacts protein S5. The interaction surface between S4 and S5 is involved in control of translational fidelity.

The protein resides in the plastid. It localises to the chloroplast. One of the primary rRNA binding proteins, it binds directly to 16S rRNA where it nucleates assembly of the body of the 30S subunit. In terms of biological role, with S5 and S12 plays an important role in translational accuracy. In Gnetum parvifolium (Small-leaved jointfir), this protein is Small ribosomal subunit protein uS4c (rps4).